We begin with the raw amino-acid sequence, 201 residues long: Single-stranded DNA-binding protein, mitochondrial (201 aa).

Residues V71–Y184 form the SSB domain.

It localises to the mitochondrion. Its function is as follows. Binds to ss-DNA. This is Single-stranded DNA-binding protein, mitochondrial from Arabidopsis thaliana (Mouse-ear cress).